The sequence spans 177 residues: Large ribosomal subunit protein uL6 (177 aa).

The protein belongs to the universal ribosomal protein uL6 family. As to quaternary structure, part of the 50S ribosomal subunit.

Functionally, this protein binds to the 23S rRNA, and is important in its secondary structure. It is located near the subunit interface in the base of the L7/L12 stalk, and near the tRNA binding site of the peptidyltransferase center. The sequence is that of Large ribosomal subunit protein uL6 from Rhodopseudomonas palustris (strain BisB18).